We begin with the raw amino-acid sequence, 440 residues long: RUN domain-containing protein 3A (440 aa).

One can recognise an RUN domain in the interval 52-184 (DDSSEEFVNF…IDFSFCLKGE (133 aa)). The disordered stretch occupies residues 213–233 (DDRESVGGSSSEDSSPEHPYL). The stretch at 262–317 (YLEELVRLRETQLKNLEAENKRLTQRISEQAEQSLQEKHQLEGVILELQEQLTGLL) forms a coiled coil. Residues 374–402 (LSSESQRLDGKQDGEPWGPIGKDPTPSML) form a disordered region.

This sequence belongs to the RUNDC3 family.

The protein is RUN domain-containing protein 3A (rundc3a) of Xenopus tropicalis (Western clawed frog).